Here is a 305-residue protein sequence, read N- to C-terminus: Thymidylate synthase (305 aa).

DUMP-binding positions include R26 and R160–R161. C180 (nucleophile) is an active-site residue. DUMP-binding positions include R207–D210, N218, and H248–Y250. (6R)-5,10-methylene-5,6,7,8-tetrahydrofolate is bound at residue D210. Residue A304 participates in (6R)-5,10-methylene-5,6,7,8-tetrahydrofolate binding.

Belongs to the thymidylate synthase family. Bacterial-type ThyA subfamily. Homodimer.

The protein localises to the cytoplasm. The catalysed reaction is dUMP + (6R)-5,10-methylene-5,6,7,8-tetrahydrofolate = 7,8-dihydrofolate + dTMP. The protein operates within pyrimidine metabolism; dTTP biosynthesis. Catalyzes the reductive methylation of 2'-deoxyuridine-5'-monophosphate (dUMP) to 2'-deoxythymidine-5'-monophosphate (dTMP) while utilizing 5,10-methylenetetrahydrofolate (mTHF) as the methyl donor and reductant in the reaction, yielding dihydrofolate (DHF) as a by-product. This enzymatic reaction provides an intracellular de novo source of dTMP, an essential precursor for DNA biosynthesis. The protein is Thymidylate synthase of Sinorhizobium fredii (strain NBRC 101917 / NGR234).